The following is a 269-amino-acid chain: 4-hydroxy-tetrahydrodipicolinate reductase (269 aa).

Position 11 to 16 (Gly-11 to Met-16) interacts with NAD(+). Lys-39 contributes to the NADP(+) binding site. Residues Gly-101 to Thr-103 and Ala-125 to Phe-128 contribute to the NAD(+) site. The Proton donor/acceptor role is filled by His-158. His-159 is a binding site for (S)-2,3,4,5-tetrahydrodipicolinate. The active-site Proton donor is the Lys-162. Gly-168–Thr-169 is a (S)-2,3,4,5-tetrahydrodipicolinate binding site.

Belongs to the DapB family. Homotetramer.

It is found in the cytoplasm. The enzyme catalyses (S)-2,3,4,5-tetrahydrodipicolinate + NAD(+) + H2O = (2S,4S)-4-hydroxy-2,3,4,5-tetrahydrodipicolinate + NADH + H(+). The catalysed reaction is (S)-2,3,4,5-tetrahydrodipicolinate + NADP(+) + H2O = (2S,4S)-4-hydroxy-2,3,4,5-tetrahydrodipicolinate + NADPH + H(+). It participates in amino-acid biosynthesis; L-lysine biosynthesis via DAP pathway; (S)-tetrahydrodipicolinate from L-aspartate: step 4/4. Catalyzes the conversion of 4-hydroxy-tetrahydrodipicolinate (HTPA) to tetrahydrodipicolinate. This chain is 4-hydroxy-tetrahydrodipicolinate reductase, found in Buchnera aphidicola subsp. Acyrthosiphon pisum (strain Tuc7).